Here is a 340-residue protein sequence, read N- to C-terminus: Deubiquitinase SseL (340 aa).

His222 is an active-site residue. Cys284 acts as the Nucleophile in catalysis.

The protein belongs to the peptidase C79 family.

Its subcellular location is the secreted. The protein resides in the host cytoplasm. Effector proteins function to alter host cell physiology and promote bacterial survival in host tissues. This protease targets the host cell ubiquitin pathway by acting as a deubiquitinase in infected host cells. This Salmonella arizonae (strain ATCC BAA-731 / CDC346-86 / RSK2980) protein is Deubiquitinase SseL (sseL).